Consider the following 338-residue polypeptide: Anthranilate phosphoribosyltransferase (338 aa).

Residues Gly81, 84–85 (GD), Thr89, 91–94 (NIST), 109–117 (KHGNRNLSS), and Ala121 contribute to the 5-phospho-alpha-D-ribose 1-diphosphate site. Anthranilate is bound at residue Gly81. Ser93 is a Mg(2+) binding site. Asn112 lines the anthranilate pocket. An anthranilate-binding site is contributed by Arg167. Positions 226 and 227 each coordinate Mg(2+).

Belongs to the anthranilate phosphoribosyltransferase family. As to quaternary structure, homodimer. Mg(2+) is required as a cofactor.

The enzyme catalyses N-(5-phospho-beta-D-ribosyl)anthranilate + diphosphate = 5-phospho-alpha-D-ribose 1-diphosphate + anthranilate. Its pathway is amino-acid biosynthesis; L-tryptophan biosynthesis; L-tryptophan from chorismate: step 2/5. In terms of biological role, catalyzes the transfer of the phosphoribosyl group of 5-phosphorylribose-1-pyrophosphate (PRPP) to anthranilate to yield N-(5'-phosphoribosyl)-anthranilate (PRA). The sequence is that of Anthranilate phosphoribosyltransferase from Cereibacter sphaeroides (strain ATCC 17023 / DSM 158 / JCM 6121 / CCUG 31486 / LMG 2827 / NBRC 12203 / NCIMB 8253 / ATH 2.4.1.) (Rhodobacter sphaeroides).